The primary structure comprises 117 residues: Small ribosomal subunit protein uS17 (117 aa).

The segment at 1–42 is disordered; it reads MMAEAKKAAPKKAATAASKDADAKGPKHTPPNPKVRGRRKTR.

Belongs to the universal ribosomal protein uS17 family. As to quaternary structure, part of the 30S ribosomal subunit.

Functionally, one of the primary rRNA binding proteins, it binds specifically to the 5'-end of 16S ribosomal RNA. In Mycolicibacterium paratuberculosis (strain ATCC BAA-968 / K-10) (Mycobacterium paratuberculosis), this protein is Small ribosomal subunit protein uS17.